The chain runs to 562 residues: Dihydroxy-acid dehydratase (562 aa).

Residue cysteine 55 coordinates [2Fe-2S] cluster. Aspartate 87 lines the Mg(2+) pocket. Cysteine 128 contributes to the [2Fe-2S] cluster binding site. Aspartate 129 and lysine 130 together coordinate Mg(2+). The residue at position 130 (lysine 130) is an N6-carboxylysine. [2Fe-2S] cluster is bound at residue cysteine 200. Glutamate 451 provides a ligand contact to Mg(2+). Serine 477 functions as the Proton acceptor in the catalytic mechanism.

The protein belongs to the IlvD/Edd family. As to quaternary structure, homodimer. The cofactor is [2Fe-2S] cluster. Mg(2+) is required as a cofactor.

The catalysed reaction is (2R)-2,3-dihydroxy-3-methylbutanoate = 3-methyl-2-oxobutanoate + H2O. It carries out the reaction (2R,3R)-2,3-dihydroxy-3-methylpentanoate = (S)-3-methyl-2-oxopentanoate + H2O. Its pathway is amino-acid biosynthesis; L-isoleucine biosynthesis; L-isoleucine from 2-oxobutanoate: step 3/4. It participates in amino-acid biosynthesis; L-valine biosynthesis; L-valine from pyruvate: step 3/4. Functionally, functions in the biosynthesis of branched-chain amino acids. Catalyzes the dehydration of (2R,3R)-2,3-dihydroxy-3-methylpentanoate (2,3-dihydroxy-3-methylvalerate) into 2-oxo-3-methylpentanoate (2-oxo-3-methylvalerate) and of (2R)-2,3-dihydroxy-3-methylbutanoate (2,3-dihydroxyisovalerate) into 2-oxo-3-methylbutanoate (2-oxoisovalerate), the penultimate precursor to L-isoleucine and L-valine, respectively. The polypeptide is Dihydroxy-acid dehydratase (Cytophaga hutchinsonii (strain ATCC 33406 / DSM 1761 / CIP 103989 / NBRC 15051 / NCIMB 9469 / D465)).